The chain runs to 268 residues: Tryptophan synthase alpha chain (268 aa).

Catalysis depends on proton acceptor residues glutamate 49 and aspartate 60.

It belongs to the TrpA family. Tetramer of two alpha and two beta chains.

It carries out the reaction (1S,2R)-1-C-(indol-3-yl)glycerol 3-phosphate + L-serine = D-glyceraldehyde 3-phosphate + L-tryptophan + H2O. The protein operates within amino-acid biosynthesis; L-tryptophan biosynthesis; L-tryptophan from chorismate: step 5/5. The alpha subunit is responsible for the aldol cleavage of indoleglycerol phosphate to indole and glyceraldehyde 3-phosphate. This Xanthomonas oryzae pv. oryzae (strain PXO99A) protein is Tryptophan synthase alpha chain.